The following is a 1412-amino-acid chain: uncharacterized protein (1412 aa).

Residues 1 to 22 (MESINVVNSVEDLPGFNPDENV) form a disordered region. Coiled-coil stretches lie at residues 317–377 (NNDF…ILRH) and 732–800 (SKEA…SDDE). Positions 778 to 808 (SRKRKHEDIVKEHEAEKRDSDDEDDFEEVDV) are disordered. The segment covering 783–797 (HEDIVKEHEAEKRDS) has biased composition (basic and acidic residues). Over residues 798 to 808 (DDEDDFEEVDV) the composition is skewed to acidic residues.

This is an uncharacterized protein from Magallana gigas (Pacific oyster).